Consider the following 321-residue polypeptide: Glucokinase (321 aa).

8–13 (GDVGGT) is an ATP binding site.

Belongs to the bacterial glucokinase family.

It is found in the cytoplasm. It carries out the reaction D-glucose + ATP = D-glucose 6-phosphate + ADP + H(+). This is Glucokinase from Salmonella typhi.